The chain runs to 436 residues: Enolase 1 (436 aa).

Ser-40 contacts Mg(2+). An intrachain disulfide couples Cys-147 to Cys-169. (2R)-2-phosphoglycerate contacts are provided by Gln-164 and Glu-208. Glu-208 serves as the catalytic Proton donor. Mg(2+)-binding residues include Asp-243, Glu-296, and Asp-322. Asp-322 lines the (2R)-2-phosphoglycerate pocket. Lys-347 functions as the Proton acceptor in the catalytic mechanism. Residues Arg-376 and Ser-377 each contribute to the (2R)-2-phosphoglycerate site.

The protein belongs to the enolase family. In terms of assembly, homodimer. Homotetramer. Interacts with methyltransferase METH; the interaction inhibits METH catalytic activity; 2-phosphoglycerate binding to ENO prevents the interaction with METH. It depends on Mg(2+) as a cofactor.

The protein localises to the cytoplasm. It is found in the nucleus. It catalyses the reaction (2R)-2-phosphoglycerate = phosphoenolpyruvate + H2O. It participates in carbohydrate degradation; glycolysis; pyruvate from D-glyceraldehyde 3-phosphate: step 4/5. Functionally, glycolytic enzyme that catalyzes the conversion of 2-phosphoglycerate to phosphoenolpyruvate. Inhibits tRNA methyltransferase METH catalytic activity in the absence of 2-phosphoglycerate. This is Enolase 1 from Entamoeba histolytica (strain ATCC 30459 / HM-1:IMSS / ABRM).